A 641-amino-acid chain; its full sequence is Ribosomal oxygenase 1 (641 aa).

Met1 is modified (N-acetylmethionine). Disordered regions lie at residues 1–35 and 54–80; these read MDGLQASAGPLRRGRPKRRRKPQPHSGSVLALPLR and RTQTLPSENSEESRVESTADDLGDALP. A compositionally biased stretch (basic residues) spans 12–23; sequence RRGRPKRRRKPQ. Ser60, Ser63, and Ser109 each carry phosphoserine. The region spanning 294 to 439 is the JmjC domain; the sequence is CSLRLLCPQA…DFLEAILPLA (146 aa). Residues His340, Asp342, and His405 each coordinate Fe cation.

The protein belongs to the ROX family. NO66 subfamily. Interacts with SP7/OSX; the interaction is direct. Interacts with MYC. Interacts with PHF19; leading to its recruitment to H3K36me3 sites. Fe(2+) is required as a cofactor. As to expression, widely expressed. Overexpressed in lung carcinomas.

The protein localises to the nucleus. It localises to the nucleolus. It is found in the nucleoplasm. It carries out the reaction N(6),N(6)-dimethyl-L-lysyl(36)-[histone H3] + 2 2-oxoglutarate + 2 O2 = L-lysyl(36)-[histone H3] + 2 formaldehyde + 2 succinate + 2 CO2. The catalysed reaction is N(6)-methyl-L-lysyl-[protein] + 2-oxoglutarate + O2 = L-lysyl-[protein] + formaldehyde + succinate + CO2. The enzyme catalyses L-histidyl-[protein] + 2-oxoglutarate + O2 = (3S)-3-hydroxy-L-histidyl-[protein] + succinate + CO2. Its function is as follows. Oxygenase that can act as both a histone lysine demethylase and a ribosomal histidine hydroxylase. Specifically demethylates 'Lys-4' (H3K4me) and 'Lys-36' (H3K36me) of histone H3, thereby playing a central role in histone code. Preferentially demethylates trimethylated H3 'Lys-4' (H3K4me3) and monomethylated H3 'Lys-4' (H3K4me1) residues, while it has weaker activity for dimethylated H3 'Lys-36' (H3K36me2). Acts as a regulator of osteoblast differentiation via its interaction with SP7/OSX by demethylating H3K4me and H3K36me, thereby inhibiting SP7/OSX-mediated promoter activation. Also catalyzes demethylation of non-histone proteins, such as CGAS: demethylation of monomethylated CGAS promotes interaction between CGAS and PARP1, followed by PARP1 inactivation. Also catalyzes the hydroxylation of 60S ribosomal protein L8 on 'His-216', thereby playing a role in ribosome biogenesis. Participates in MYC-induced transcriptional activation. The chain is Ribosomal oxygenase 1 from Homo sapiens (Human).